We begin with the raw amino-acid sequence, 71 residues long: Translation initiation factor IF-1 (71 aa).

Positions 1–71 (MAKQSAIEQD…LSKARITYRY (71 aa)) constitute an S1-like domain.

Belongs to the IF-1 family. Component of the 30S ribosomal translation pre-initiation complex which assembles on the 30S ribosome in the order IF-2 and IF-3, IF-1 and N-formylmethionyl-tRNA(fMet); mRNA recruitment can occur at any time during PIC assembly.

The protein resides in the cytoplasm. Functionally, one of the essential components for the initiation of protein synthesis. Stabilizes the binding of IF-2 and IF-3 on the 30S subunit to which N-formylmethionyl-tRNA(fMet) subsequently binds. Helps modulate mRNA selection, yielding the 30S pre-initiation complex (PIC). Upon addition of the 50S ribosomal subunit IF-1, IF-2 and IF-3 are released leaving the mature 70S translation initiation complex. The chain is Translation initiation factor IF-1 from Flavobacterium psychrophilum (strain ATCC 49511 / DSM 21280 / CIP 103535 / JIP02/86).